The sequence spans 252 residues: Phosphoglycolate phosphatase (252 aa).

Asp-13 acts as the Nucleophile in catalysis. Mg(2+) is bound by residues Asp-13, Asp-15, and Asp-192.

The protein belongs to the HAD-like hydrolase superfamily. CbbY/CbbZ/Gph/YieH family. Monomer. Mg(2+) is required as a cofactor. Chloride serves as cofactor.

It carries out the reaction 2-phosphoglycolate + H2O = glycolate + phosphate. It participates in organic acid metabolism; glycolate biosynthesis; glycolate from 2-phosphoglycolate: step 1/1. In terms of biological role, specifically catalyzes the dephosphorylation of 2-phosphoglycolate. Is involved in the dissimilation of the intracellular 2-phosphoglycolate formed during the DNA repair of 3'-phosphoglycolate ends, a major class of DNA lesions induced by oxidative stress. The chain is Phosphoglycolate phosphatase from Shigella dysenteriae serotype 1 (strain Sd197).